A 398-amino-acid polypeptide reads, in one-letter code: MKQLTILGSTGSIGCSTLDVVRHNPEHFRVVALVAGKNVTRMVEQCLEFSPRYAVMDDEASAKLLKTMLQQQGSRTEVLSGQQAACDMAALEDVDQVMAAIVGAAGLLPTLAAIRAGKTILLANKESLVTCGRLFMDAVKQSKAQLLPVDSEHNAIFQSLPQPIQHNLGYADLEQNGVVSILLTGSGGPFRETPLRDLATMTPDQACRHPNWSMGRKISVDSATMMNKGLEYIEARWLFNASASQMEVLIHPQSVIHSMVRYQDGSVLAQLGEPDMRTPIAHTMAWPNRVNSGVKPLDFCKLSALTFAAPDYDRYPCLKLAMEAFEQGQAATTALNAANEITVAAFLAQQIRFTDIAALNLSVLEKMDMREPQCVDDVLSVDANAREVARKEVMRLAS.

NADPH contacts are provided by Thr10, Gly11, Ser12, Ile13, Gly36, Lys37, Asn38, and Asn124. Lys125 provides a ligand contact to 1-deoxy-D-xylulose 5-phosphate. Glu126 lines the NADPH pocket. Asp150 contacts Mn(2+). 4 residues coordinate 1-deoxy-D-xylulose 5-phosphate: Ser151, Glu152, Ser186, and His209. Glu152 serves as a coordination point for Mn(2+). Residue Gly215 participates in NADPH binding. Positions 222, 227, 228, and 231 each coordinate 1-deoxy-D-xylulose 5-phosphate. Residue Glu231 participates in Mn(2+) binding.

The protein belongs to the DXR family. Homodimer. It depends on Mg(2+) as a cofactor. Mn(2+) serves as cofactor. Co(2+) is required as a cofactor.

It catalyses the reaction 2-C-methyl-D-erythritol 4-phosphate + NADP(+) = 1-deoxy-D-xylulose 5-phosphate + NADPH + H(+). The protein operates within isoprenoid biosynthesis; isopentenyl diphosphate biosynthesis via DXP pathway; isopentenyl diphosphate from 1-deoxy-D-xylulose 5-phosphate: step 1/6. Its activity is regulated as follows. Inhibited by fosmidomycin. Its function is as follows. Catalyzes the NADPH-dependent rearrangement and reduction of 1-deoxy-D-xylulose-5-phosphate (DXP) to 2-C-methyl-D-erythritol 4-phosphate (MEP). This Escherichia coli (strain K12) protein is 1-deoxy-D-xylulose 5-phosphate reductoisomerase (dxr).